We begin with the raw amino-acid sequence, 2998 residues long: Probable polyketide synthase 14 (2998 aa).

The Ketosynthase family 3 (KS3) domain occupies 19 to 456 (EDDIAIIGIG…GSNCCLILSE (438 aa)). Residues cysteine 189, histidine 331, and histidine 376 each act as for beta-ketoacyl synthase activity in the active site. The tract at residues 657–690 (GIEASFIVGHSLGEIPAAYCSGMITLDTLCYLIY) is acyl/malonyl transferase. The For acyl/malonyl transferase activity role is filled by serine 667. Residues 962–1084 (IDQLGFSLIE…GNFQLFTSGN (123 aa)) form an N-terminal hotdog fold region. The 288-residue stretch at 962–1249 (IDQLGFSLIE…CKSLTIIKDS (288 aa)) folds into the PKS/mFAS DH domain. Histidine 996 acts as the Proton acceptor; for dehydratase activity in catalysis. The C-terminal hotdog fold stretch occupies residues 1101–1249 (NLTKLTKNEL…CKSLTIIKDS (149 aa)). Aspartate 1159 acts as the Proton donor; for dehydratase activity in catalysis. The helical transmembrane segment at 1979-1999 (SILIHSGSGGIGLSALNILKW) threads the bilayer. The Carrier domain maps to 2476-2553 (ENDTSIDSLF…SSIKLITNQL (78 aa)). Serine 2513 is subject to O-(pantetheine 4'-phosphoryl)serine. A disordered region spans residues 2559–2578 (DGQQQQHRQNKKNNNIPENK). A compositionally biased stretch (low complexity) spans 2561–2573 (QQQQHRQNKKNNN). Residues 2621 to 2641 (IFLTGSTGFLGAYLLWYLIQM) form a helical membrane-spanning segment.

Pantetheine 4'-phosphate is required as a cofactor.

The protein localises to the membrane. Its function is as follows. Probable polyketide synthase. This is Probable polyketide synthase 14 (pks14) from Dictyostelium discoideum (Social amoeba).